We begin with the raw amino-acid sequence, 505 residues long: Trans-cinnamate 4-monooxygenase (505 aa).

Residues 3–23 form a helical membrane-spanning segment; it reads LLLLEKTLLALFIAATIAITI. (E)-cinnamate contacts are provided by residues 212–217 and Ala-305; that span reads RSRLAQ. Cys-446 is a binding site for heme.

This sequence belongs to the cytochrome P450 family. Heme is required as a cofactor.

Its subcellular location is the membrane. It carries out the reaction (E)-cinnamate + reduced [NADPH--hemoprotein reductase] + O2 = (E)-4-coumarate + oxidized [NADPH--hemoprotein reductase] + H2O + H(+). The protein operates within phenylpropanoid metabolism; trans-4-coumarate biosynthesis; trans-4-coumarate from trans-cinnamate: step 1/1. Catalyzes the first oxidative step of the phenylpropanoid pathway in higher plants by transforming trans-cinnamate into p-coumarate. The compounds formed by this pathway are essential components for lignification, pollination, and defense against ultraviolet light, predators and pathogens. This Cicer arietinum (Chickpea) protein is Trans-cinnamate 4-monooxygenase (CYP73A19).